The chain runs to 524 residues: Cytochrome P450 monooxygenase ankB (524 aa).

A helical transmembrane segment spans residues 22-42; the sequence is FHALSIQAPGLLLGTLLFYLF. Cys-466 is a heme binding site.

The protein belongs to the cytochrome P450 family. The cofactor is heme.

The protein resides in the membrane. The catalysed reaction is cyclo(L-arginyl-tyrosyl) + reduced [NADPH--hemoprotein reductase] + O2 = cyclo(L-arginyl-L-dehydrotyrosyl) + oxidized [NADPH--hemoprotein reductase] + 2 H2O + H(+). The protein operates within alkaloid biosynthesis. Its function is as follows. Cytochrome P450 monooxygenase; part of the ank cluster that mediates the biosynthesis of NK13650 C, a highly modified cyclo-arginine-tyrosine dipeptide. AnkB is responsible for desaturation of the ankA product cyclo-Arg-Tyr diketopiperazine, likely through hydroxylation of the benzylic position followed by dehydration to yield a dehydro-cyclodipeptide. Within the pathway, the cyclodipeptide synthase ankA acts as the scaffold-generating enzyme and is responsible for formation of the cyclo-Arg-Tyr diketopiperazine (cRY) from L-Arg and L-Tyr. The ankA product cRY is desaturated by the cytochrome P450 monooxygenase ankB to yield a dehydro-cyclodipeptide intermediate. The FAD-dependent monooxygenase ankC then installs the m-OH, ankD catalyzes the attachment of L-homoserine, and ankE ligates citrate to the ankD product to yield NK13650 B. The O-methyltransferase ankF is responsible for methylation of the C-17 phenol group of NK13650 B to produce NK13650 D. Amidation of NK13650 D with L-Asp by ankG then leads to the production of NK13650 C, whereas amidation of NK13650 B produces NK13650 A. This chain is Cytochrome P450 monooxygenase ankB, found in Aspergillus thermomutatus (Neosartorya pseudofischeri).